The primary structure comprises 156 residues: Jun dimerization protein 2 (156 aa).

The segment at 56–95 (KRPFDAIKSEDDDDDERKKRRREKNKVAAARCRNRKKERT) is disordered. The 64-residue stretch at 70-133 (DERKKRRREK…QQLIVMLNLH (64 aa)) folds into the bZIP domain. Positions 72–94 (RKKRRREKNKVAAARCRNRKKER) are basic motif. The segment at 98 to 126 (LQKESERLEMLNSDLKSQIEELKSERQQL) is leucine-zipper.

This sequence belongs to the bZIP family. ATF subfamily.

It localises to the nucleus. Component of the AP-1 transcription factor that represses transactivation mediated by the Jun family of proteins. This is Jun dimerization protein 2 (jdp2) from Danio rerio (Zebrafish).